We begin with the raw amino-acid sequence, 260 residues long: Zinc finger protein 575 (260 aa).

The disordered stretch occupies residues 22-81; sequence PGLGPGRWLLPGAHQPSCPPAPHQGPLQKPSQSAPGPTASASAPPRPRRRPPPQRPHRCP. Residues 51–64 are compositionally biased toward low complexity; that stretch reads PSQSAPGPTASASA. Over residues 67–78 the composition is skewed to basic residues; the sequence is RPRRRPPPQRPH. 6 consecutive C2H2-type zinc fingers follow at residues 78 to 100, 106 to 128, 134 to 156, 162 to 184, 192 to 214, and 228 to 255; these read HRCP…RLAH, HPCP…RLTH, HPCP…LWTH, YPCP…RHTH, YPCP…RLCH, and HRCS…QVEH.

Belongs to the krueppel C2H2-type zinc-finger protein family.

It is found in the nucleus. May be involved in transcriptional regulation. This is Zinc finger protein 575 (ZNF575) from Macaca fascicularis (Crab-eating macaque).